The chain runs to 295 residues: Acetyl-coenzyme A carboxylase carboxyl transferase subunit beta (295 aa).

Residues 25-294 form the CoA carboxyltransferase N-terminal domain; the sequence is VWTKCTSCEQ…PFNAEELSDT (270 aa). Zn(2+) contacts are provided by cysteine 29, cysteine 32, cysteine 48, and cysteine 51. The C4-type zinc-finger motif lies at 29-51; sequence CTSCEQVLYRDELKRHLEVCPKC.

This sequence belongs to the AccD/PCCB family. As to quaternary structure, acetyl-CoA carboxylase is a heterohexamer composed of biotin carboxyl carrier protein (AccB), biotin carboxylase (AccC) and two subunits each of ACCase subunit alpha (AccA) and ACCase subunit beta (AccD). It depends on Zn(2+) as a cofactor.

The protein localises to the cytoplasm. The catalysed reaction is N(6)-carboxybiotinyl-L-lysyl-[protein] + acetyl-CoA = N(6)-biotinyl-L-lysyl-[protein] + malonyl-CoA. The protein operates within lipid metabolism; malonyl-CoA biosynthesis; malonyl-CoA from acetyl-CoA: step 1/1. Its function is as follows. Component of the acetyl coenzyme A carboxylase (ACC) complex. Biotin carboxylase (BC) catalyzes the carboxylation of biotin on its carrier protein (BCCP) and then the CO(2) group is transferred by the transcarboxylase to acetyl-CoA to form malonyl-CoA. The chain is Acetyl-coenzyme A carboxylase carboxyl transferase subunit beta from Mannheimia succiniciproducens (strain KCTC 0769BP / MBEL55E).